Reading from the N-terminus, the 591-residue chain is MKKISLPKIGIRPVIDGRRMGVRESLEEQTMNMAKATAALIIEKIRHACGAQVECVIADTCIAGMAESAACEEKFSSQNVGVTITVTPCWCYGSETIDMDPMRPKAIWGFNGTERPGAVYLAAALAAHNQKGIPAFSIYGHDVQDADDVSIPADVEEKLLRFARAGLAVASMKGKSYLSVGGVSMGIAGSIVDHNFFESWLGMKVQAVDMTELRRRIDQKIYDEAELEMALAWADKNFRYGEDQNAQQYKRNEAQNRAVLKESLLMAMCIRDMMQGNKTLADKGLVEESLGYNAIAAGFQGQRHWTDQYPNGDTAEALLNSSFDWNGVREPFIVATENDSLNGVAMLFGHQLTGTAQIFADVRTYWSPEAVERVTGQALNGLAEHGIIHLINSGSAALDGACKQRDSEGKPTMKPHWEISQQEADACLAATEWCPAIHEYFRGGGYSSRFLTEGGVPFTMTRVNMIKGLGPVLQIAEGWSVELPKVMHDQLDARTNSTWPTTWFAPRLTGKGPFTDVYSVMANWGANHGVLTIGHVGADFITLAAMLRIPVCMHNVEEAKIYRPSAWAAHGMDVEGQDYRACQNYGPLYKR.

Active-site proton acceptor residues include Glu-337 and Asp-361. Mn(2+) contacts are provided by Glu-337, Asp-361, and His-528.

It belongs to the L-fucose isomerase family. Homohexamer. It depends on Mn(2+) as a cofactor.

It is found in the cytoplasm. It carries out the reaction L-fucose = L-fuculose. The protein operates within carbohydrate degradation; L-fucose degradation; L-lactaldehyde and glycerone phosphate from L-fucose: step 1/3. In terms of biological role, converts the aldose L-fucose into the corresponding ketose L-fuculose. The polypeptide is L-fucose isomerase (Salmonella arizonae (strain ATCC BAA-731 / CDC346-86 / RSK2980)).